The following is a 158-amino-acid chain: MKILGIDPGTRNMGYAVLEKNVNKISLIEAGLIKMKPENLQFQLTQMCEAIDQIFEFHKIDEVAIESMFYAYNPQSVLKLAQFRGGLSLKILQVFGNFAEYTPLQIKKNVTGKAKADKTQVAFMVKKMLGISKDIKPLDVTDAIAIAITHAHNLRGVK.

Catalysis depends on residues Asp7, Glu66, and Asp139. Residues Asp7, Glu66, and Asp139 each contribute to the Mg(2+) site.

The protein belongs to the RuvC family. In terms of assembly, homodimer which binds Holliday junction (HJ) DNA. The HJ becomes 2-fold symmetrical on binding to RuvC with unstacked arms; it has a different conformation from HJ DNA in complex with RuvA. In the full resolvosome a probable DNA-RuvA(4)-RuvB(12)-RuvC(2) complex forms which resolves the HJ. The cofactor is Mg(2+).

It is found in the cytoplasm. It carries out the reaction Endonucleolytic cleavage at a junction such as a reciprocal single-stranded crossover between two homologous DNA duplexes (Holliday junction).. The RuvA-RuvB-RuvC complex processes Holliday junction (HJ) DNA during genetic recombination and DNA repair. Endonuclease that resolves HJ intermediates. Cleaves cruciform DNA by making single-stranded nicks across the HJ at symmetrical positions within the homologous arms, yielding a 5'-phosphate and a 3'-hydroxyl group; requires a central core of homology in the junction. The consensus cleavage sequence is 5'-(A/T)TT(C/G)-3'. Cleavage occurs on the 3'-side of the TT dinucleotide at the point of strand exchange. HJ branch migration catalyzed by RuvA-RuvB allows RuvC to scan DNA until it finds its consensus sequence, where it cleaves and resolves the cruciform DNA. This Campylobacter hominis (strain ATCC BAA-381 / DSM 21671 / CCUG 45161 / LMG 19568 / NCTC 13146 / CH001A) protein is Crossover junction endodeoxyribonuclease RuvC.